A 262-amino-acid polypeptide reads, in one-letter code: Phosphatidylserine decarboxylase proenzyme (262 aa).

Active-site charge relay system; for autoendoproteolytic cleavage activity residues include aspartate 86, histidine 142, and serine 226. Residue serine 226 is the Schiff-base intermediate with substrate; via pyruvic acid; for decarboxylase activity of the active site. Pyruvic acid (Ser); by autocatalysis is present on serine 226.

The protein belongs to the phosphatidylserine decarboxylase family. PSD-B subfamily. Prokaryotic type I sub-subfamily. As to quaternary structure, heterodimer of a large membrane-associated beta subunit and a small pyruvoyl-containing alpha subunit. It depends on pyruvate as a cofactor. Post-translationally, is synthesized initially as an inactive proenzyme. Formation of the active enzyme involves a self-maturation process in which the active site pyruvoyl group is generated from an internal serine residue via an autocatalytic post-translational modification. Two non-identical subunits are generated from the proenzyme in this reaction, and the pyruvate is formed at the N-terminus of the alpha chain, which is derived from the carboxyl end of the proenzyme. The autoendoproteolytic cleavage occurs by a canonical serine protease mechanism, in which the side chain hydroxyl group of the serine supplies its oxygen atom to form the C-terminus of the beta chain, while the remainder of the serine residue undergoes an oxidative deamination to produce ammonia and the pyruvoyl prosthetic group on the alpha chain. During this reaction, the Ser that is part of the protease active site of the proenzyme becomes the pyruvoyl prosthetic group, which constitutes an essential element of the active site of the mature decarboxylase.

It localises to the cell membrane. The catalysed reaction is a 1,2-diacyl-sn-glycero-3-phospho-L-serine + H(+) = a 1,2-diacyl-sn-glycero-3-phosphoethanolamine + CO2. It functions in the pathway phospholipid metabolism; phosphatidylethanolamine biosynthesis; phosphatidylethanolamine from CDP-diacylglycerol: step 2/2. Its function is as follows. Catalyzes the formation of phosphatidylethanolamine (PtdEtn) from phosphatidylserine (PtdSer). The protein is Phosphatidylserine decarboxylase proenzyme of Bacillus cereus (strain B4264).